A 409-amino-acid polypeptide reads, in one-letter code: Glucose-1-phosphate adenylyltransferase (409 aa).

Alpha-D-glucose 1-phosphate is bound by residues Gly168, 183–184, and Ser201; that span reads EK.

Belongs to the bacterial/plant glucose-1-phosphate adenylyltransferase family. In terms of assembly, homotetramer.

The enzyme catalyses alpha-D-glucose 1-phosphate + ATP + H(+) = ADP-alpha-D-glucose + diphosphate. The protein operates within glycan biosynthesis; glycogen biosynthesis. Functionally, involved in the biosynthesis of ADP-glucose, a building block required for the elongation reactions to produce glycogen. Catalyzes the reaction between ATP and alpha-D-glucose 1-phosphate (G1P) to produce pyrophosphate and ADP-Glc. The polypeptide is Glucose-1-phosphate adenylyltransferase (Corynebacterium glutamicum (strain R)).